Here is a 140-residue protein sequence, read N- to C-terminus: UPF0299 membrane protein CGSHiGG_01475 (140 aa).

4 helical membrane-spanning segments follow: residues 1–21, 33–52, 60–80, and 92–112; these read MIQKLFLLVRSLVILSIMLYL, VPGSIWGLLLLFLGLTTRVI, GASLLIRFMAVLFVPVSVGII, and ILLVPNIVSTCVTLLVIGFLG.

This sequence belongs to the UPF0299 family.

The protein resides in the cell inner membrane. The polypeptide is UPF0299 membrane protein CGSHiGG_01475 (Haemophilus influenzae (strain PittGG)).